The chain runs to 126 residues: S-adenosylmethionine decarboxylase proenzyme (126 aa).

Ser-63 (schiff-base intermediate with substrate; via pyruvic acid) is an active-site residue. Ser-63 carries the pyruvic acid (Ser); by autocatalysis modification. The active-site Proton acceptor; for processing activity is the His-68. The active-site Proton donor; for catalytic activity is the Cys-83.

The protein belongs to the prokaryotic AdoMetDC family. Type 1 subfamily. Heterotetramer of two alpha and two beta chains arranged as a dimer of alpha/beta heterodimers. The cofactor is pyruvate. Post-translationally, is synthesized initially as an inactive proenzyme. Formation of the active enzyme involves a self-maturation process in which the active site pyruvoyl group is generated from an internal serine residue via an autocatalytic post-translational modification. Two non-identical subunits are generated from the proenzyme in this reaction, and the pyruvate is formed at the N-terminus of the alpha chain, which is derived from the carboxyl end of the proenzyme. The post-translation cleavage follows an unusual pathway, termed non-hydrolytic serinolysis, in which the side chain hydroxyl group of the serine supplies its oxygen atom to form the C-terminus of the beta chain, while the remainder of the serine residue undergoes an oxidative deamination to produce ammonia and the pyruvoyl group blocking the N-terminus of the alpha chain.

The catalysed reaction is S-adenosyl-L-methionine + H(+) = S-adenosyl 3-(methylsulfanyl)propylamine + CO2. The protein operates within amine and polyamine biosynthesis; S-adenosylmethioninamine biosynthesis; S-adenosylmethioninamine from S-adenosyl-L-methionine: step 1/1. In terms of biological role, catalyzes the decarboxylation of S-adenosylmethionine to S-adenosylmethioninamine (dcAdoMet), the propylamine donor required for the synthesis of the polyamines spermine and spermidine from the diamine putrescine. In Bacillus velezensis (strain DSM 23117 / BGSC 10A6 / LMG 26770 / FZB42) (Bacillus amyloliquefaciens subsp. plantarum), this protein is S-adenosylmethionine decarboxylase proenzyme.